Consider the following 274-residue polypeptide: uncharacterized protein (274 aa).

Residues 99–206 (NNVISGYVDL…ESEMEIFIQK (108 aa)) are a coiled coil.

This is an uncharacterized protein from Dictyostelium discoideum (Social amoeba).